The primary structure comprises 304 residues: UDP-3-O-acyl-N-acetylglucosamine deacetylase (304 aa).

Zn(2+) is bound by residues H78, H237, and D241. H264 (proton donor) is an active-site residue.

The protein belongs to the LpxC family. The cofactor is Zn(2+).

It catalyses the reaction a UDP-3-O-[(3R)-3-hydroxyacyl]-N-acetyl-alpha-D-glucosamine + H2O = a UDP-3-O-[(3R)-3-hydroxyacyl]-alpha-D-glucosamine + acetate. The protein operates within glycolipid biosynthesis; lipid IV(A) biosynthesis; lipid IV(A) from (3R)-3-hydroxytetradecanoyl-[acyl-carrier-protein] and UDP-N-acetyl-alpha-D-glucosamine: step 2/6. In terms of biological role, catalyzes the hydrolysis of UDP-3-O-myristoyl-N-acetylglucosamine to form UDP-3-O-myristoylglucosamine and acetate, the committed step in lipid A biosynthesis. This Acidithiobacillus ferrooxidans (strain ATCC 53993 / BNL-5-31) (Leptospirillum ferrooxidans (ATCC 53993)) protein is UDP-3-O-acyl-N-acetylglucosamine deacetylase.